A 739-amino-acid polypeptide reads, in one-letter code: Phosphoribosylformylglycinamidine synthase subunit PurL (739 aa).

Residue histidine 54 is part of the active site. Residues tyrosine 57 and lysine 96 each contribute to the ATP site. Glutamate 98 provides a ligand contact to Mg(2+). Substrate contacts are provided by residues serine 99–histidine 102 and arginine 121. Histidine 100 serves as the catalytic Proton acceptor. Aspartate 122 contacts Mg(2+). Substrate is bound at residue glutamine 245. Residue aspartate 273 coordinates Mg(2+). Substrate is bound at residue glutamate 317 to glutamine 319. ATP-binding residues include aspartate 500 and glycine 537. Asparagine 538 is a binding site for Mg(2+). Serine 540 contacts substrate.

Belongs to the FGAMS family. In terms of assembly, monomer. Part of the FGAM synthase complex composed of 1 PurL, 1 PurQ and 2 PurS subunits.

The protein resides in the cytoplasm. It carries out the reaction N(2)-formyl-N(1)-(5-phospho-beta-D-ribosyl)glycinamide + L-glutamine + ATP + H2O = 2-formamido-N(1)-(5-O-phospho-beta-D-ribosyl)acetamidine + L-glutamate + ADP + phosphate + H(+). The protein operates within purine metabolism; IMP biosynthesis via de novo pathway; 5-amino-1-(5-phospho-D-ribosyl)imidazole from N(2)-formyl-N(1)-(5-phospho-D-ribosyl)glycinamide: step 1/2. Part of the phosphoribosylformylglycinamidine synthase complex involved in the purines biosynthetic pathway. Catalyzes the ATP-dependent conversion of formylglycinamide ribonucleotide (FGAR) and glutamine to yield formylglycinamidine ribonucleotide (FGAM) and glutamate. The FGAM synthase complex is composed of three subunits. PurQ produces an ammonia molecule by converting glutamine to glutamate. PurL transfers the ammonia molecule to FGAR to form FGAM in an ATP-dependent manner. PurS interacts with PurQ and PurL and is thought to assist in the transfer of the ammonia molecule from PurQ to PurL. In Exiguobacterium sp. (strain ATCC BAA-1283 / AT1b), this protein is Phosphoribosylformylglycinamidine synthase subunit PurL.